We begin with the raw amino-acid sequence, 318 residues long: Methionyl-tRNA formyltransferase (318 aa).

114 to 117 (SVLP) is a binding site for (6S)-5,6,7,8-tetrahydrofolate.

Belongs to the Fmt family.

The catalysed reaction is L-methionyl-tRNA(fMet) + (6R)-10-formyltetrahydrofolate = N-formyl-L-methionyl-tRNA(fMet) + (6S)-5,6,7,8-tetrahydrofolate + H(+). In terms of biological role, attaches a formyl group to the free amino group of methionyl-tRNA(fMet). The formyl group appears to play a dual role in the initiator identity of N-formylmethionyl-tRNA by promoting its recognition by IF2 and preventing the misappropriation of this tRNA by the elongation apparatus. This chain is Methionyl-tRNA formyltransferase, found in Bdellovibrio bacteriovorus (strain ATCC 15356 / DSM 50701 / NCIMB 9529 / HD100).